The chain runs to 2026 residues: Fatty acid synthase subunit beta (2026 aa).

The interval 148-526 (ILMAFGGQGS…VDGRGVRIIA (379 aa)) is acetyltransferase (AT) domain. The active-site For acetyltransferase activity is the Ser-268. An enoyl reductase (ER) domain region spans residues 579 to 824 (SQLLQAPPII…LILAAAGVAD (246 aa)). The dehydratase (DH) domain stretch occupies residues 1130–1604 (SQVTGSVRSA…LPGDQLTVRI (475 aa)). In terms of domain architecture, MaoC-like spans 1512 to 1625 (PGLIDNGSRT…LSVAAYREGT (114 aa)). The malonyl/palmitoyl transferase (MT/PT) domain stretch occupies residues 1643-2016 (YLFTGQGSQA…LEEAAAVTGS (374 aa)). The active-site For malonyltransferase activity is Ser-1788.

This sequence belongs to the fungal fatty acid synthetase subunit beta family. [Alpha(6)beta(6)] hexamers of two multifunctional subunits (alpha and beta).

It carries out the reaction acetyl-CoA + n malonyl-CoA + 2n NADPH + 4n H(+) = a long-chain-acyl-CoA + n CoA + n CO2 + 2n NADP(+).. The enzyme catalyses holo-[ACP] + acetyl-CoA = acetyl-[ACP] + CoA. The catalysed reaction is holo-[ACP] + malonyl-CoA = malonyl-[ACP] + CoA. It catalyses the reaction a (3R)-hydroxyacyl-[ACP] = a (2E)-enoyl-[ACP] + H2O. It carries out the reaction a 2,3-saturated acyl-[ACP] + NAD(+) = a (2E)-enoyl-[ACP] + NADH + H(+). The enzyme catalyses (9Z)-octadecenoyl-[ACP] + H2O = (9Z)-octadecenoate + holo-[ACP] + H(+). The protein operates within secondary metabolite biosynthesis. Fatty acid synthase beta subunit; part of the gene cluster that mediates the biosynthesis of oryzines, natural products with an unusual maleidride backbone. The two subunits of the fungal fatty acid synthase oryfasA and oryfasB probably form octenoic acid. This fatty acid is most likely activated by the acyl-CoA ligase oryP to give octenyl-CoA before the citrate synthase-like protein oryE catalyzes condensation with oxaloacetate to form tricarboxylic acid. The next steps of the pathways are conjectural, but a favorite possible route has been proposed, beginning with decarboxylation and concomitant dehydration by the decarboxylase oryM, followed by tautomerization, which may lead to the production of a diene intermediate. Reduction of this diene intermediate could give the known metabolite piliformic acid. On the pathway to oryzine B and oryzine A, however, hydroxylation of the diene by the alpha-ketoglutarate-dependent dioxygenase oryG and lactonisation by the lactonohydrolases oryH or oryL could give oryzine B directly. Finally, enoyl reduction by the dehydrogenase oryD would then convert oryzine B into oryzine A. This Aspergillus oryzae (strain ATCC 42149 / RIB 40) (Yellow koji mold) protein is Fatty acid synthase subunit beta.